The primary structure comprises 209 residues: Ribulose-phosphate 3-epimerase (209 aa).

Substrate is bound at residue S8. Residues H33, D35, H64, and D170 each contribute to the a divalent metal cation site. D35 acts as the Proton acceptor in catalysis. Residues H64, 170-172 (DGG), and 191-192 (GS) each bind substrate. Catalysis depends on D170, which acts as the Proton donor.

It belongs to the ribulose-phosphate 3-epimerase family. Requires a divalent metal cation as cofactor.

The enzyme catalyses D-ribulose 5-phosphate = D-xylulose 5-phosphate. The protein operates within carbohydrate degradation. Functionally, catalyzes the reversible epimerization of D-ribulose 5-phosphate to D-xylulose 5-phosphate. The chain is Ribulose-phosphate 3-epimerase from Mycoplasma genitalium (strain ATCC 33530 / DSM 19775 / NCTC 10195 / G37) (Mycoplasmoides genitalium).